The primary structure comprises 170 residues: Transcriptional repressor NrdR (170 aa).

A zinc finger spans residues 3–34 (CPFCRHPDSRVVDSRTSEDGSSIRRRRQCPEC). The ATP-cone domain maps to 46–136 (LSVVKRSGVA…VYRGFSSLED (91 aa)). Residues 148–170 (RENEGDPDADGSADAPVRLTTSV) form a disordered region.

This sequence belongs to the NrdR family. Zn(2+) serves as cofactor.

Its function is as follows. Negatively regulates transcription of bacterial ribonucleotide reductase nrd genes and operons by binding to NrdR-boxes. This Beutenbergia cavernae (strain ATCC BAA-8 / DSM 12333 / CCUG 43141 / JCM 11478 / NBRC 16432 / NCIMB 13614 / HKI 0122) protein is Transcriptional repressor NrdR.